The following is a 174-amino-acid chain: Granulocyte colony-stimulating factor (174 aa).

Cystine bridges form between Cys-36-Cys-42 and Cys-64-Cys-74. A glycan (O-linked (GalNAc...) threonine) is linked at Thr-133.

Belongs to the IL-6 superfamily. As to quaternary structure, monomer. Post-translationally, O-glycosylated.

It localises to the secreted. Granulocyte/macrophage colony-stimulating factors are cytokines that act in hematopoiesis by controlling the production, differentiation, and function of 2 related white cell populations of the blood, the granulocytes and the monocytes-macrophages. This CSF induces granulocytes. In Ovis aries (Sheep), this protein is Granulocyte colony-stimulating factor (CSF3).